Here is a 158-residue protein sequence, read N- to C-terminus: N5-carboxyaminoimidazole ribonucleotide mutase (158 aa).

Substrate is bound by residues Ser-10, Asp-13, and Arg-40.

The protein belongs to the AIR carboxylase family. Class I subfamily.

It carries out the reaction 5-carboxyamino-1-(5-phospho-D-ribosyl)imidazole + H(+) = 5-amino-1-(5-phospho-D-ribosyl)imidazole-4-carboxylate. Its pathway is purine metabolism; IMP biosynthesis via de novo pathway; 5-amino-1-(5-phospho-D-ribosyl)imidazole-4-carboxylate from 5-amino-1-(5-phospho-D-ribosyl)imidazole (N5-CAIR route): step 2/2. In terms of biological role, catalyzes the conversion of N5-carboxyaminoimidazole ribonucleotide (N5-CAIR) to 4-carboxy-5-aminoimidazole ribonucleotide (CAIR). The chain is N5-carboxyaminoimidazole ribonucleotide mutase from Saccharolobus solfataricus (strain ATCC 35092 / DSM 1617 / JCM 11322 / P2) (Sulfolobus solfataricus).